An 80-amino-acid chain; its full sequence is UPF0291 protein LCA_1274 (80 aa).

Residues 59 to 80 are disordered; that stretch reads EGKEVTPEKVKDIQREKGLRDD.

It belongs to the UPF0291 family.

Its subcellular location is the cytoplasm. The protein is UPF0291 protein LCA_1274 of Latilactobacillus sakei subsp. sakei (strain 23K) (Lactobacillus sakei subsp. sakei).